A 352-amino-acid polypeptide reads, in one-letter code: Galactokinase (352 aa).

14–17 contributes to the substrate binding site; sequence EHTD. ATP-binding positions include serine 46 and 96 to 102; that span reads GAGLSSS. Mg(2+) is bound by residues serine 102 and glutamate 134. The active-site Proton acceptor is aspartate 146. A substrate-binding site is contributed by tyrosine 196.

It belongs to the GHMP kinase family. GalK subfamily.

It localises to the cytoplasm. It catalyses the reaction alpha-D-galactose + ATP = alpha-D-galactose 1-phosphate + ADP + H(+). It participates in carbohydrate metabolism; galactose metabolism. In terms of biological role, catalyzes the transfer of the gamma-phosphate of ATP to D-galactose to form alpha-D-galactose-1-phosphate (Gal-1-P). This Thermosipho africanus (strain TCF52B) protein is Galactokinase.